Consider the following 297-residue polypeptide: HTH-type transcriptional regulator ArgP (297 aa).

The HTH lysR-type domain maps to 4–60 (PDYRTLQALDAVIRERGFERAAQKLCITQSAVSQRIKQLENLFGQPLLVRTIPPRPT). Positions 21–40 (FERAAQKLCITQSAVSQRIK) form a DNA-binding region, H-T-H motif.

Belongs to the LysR transcriptional regulatory family. In terms of assembly, homodimer.

Controls the transcription of genes involved in arginine and lysine metabolism. In Pectobacterium carotovorum subsp. carotovorum (strain PC1), this protein is HTH-type transcriptional regulator ArgP.